The sequence spans 393 residues: Geranylgeranyl pyrophosphate synthase 2 (393 aa).

Residues Lys109, Arg112, and His141 each coordinate isopentenyl diphosphate. 2 residues coordinate Mg(2+): Asp148 and Asp152. Dimethylallyl diphosphate is bound at residue Arg157. Arg158 serves as a coordination point for isopentenyl diphosphate. Residues Lys235, Thr236, and Gln275 each contribute to the dimethylallyl diphosphate site. Asp278 serves as a coordination point for Mg(2+). Residues Asn282, Lys292, and Lys302 each contribute to the dimethylallyl diphosphate site.

It belongs to the FPP/GGPP synthase family. The cofactor is Mg(2+).

The enzyme catalyses isopentenyl diphosphate + dimethylallyl diphosphate = (2E)-geranyl diphosphate + diphosphate. It carries out the reaction isopentenyl diphosphate + (2E)-geranyl diphosphate = (2E,6E)-farnesyl diphosphate + diphosphate. The catalysed reaction is isopentenyl diphosphate + (2E,6E)-farnesyl diphosphate = (2E,6E,10E)-geranylgeranyl diphosphate + diphosphate. Its pathway is plant hormone biosynthesis; gibberellin biosynthesis. Its function is as follows. Geranylgeranyl pyrophosphate synthase; part of the gene cluster that mediates the biosynthesis of gibberellins (GAs), diterpenoids that may provide a selective advantage during infection of the preferred host plant, rice. Gibberellins (GAs) are diterpenoids and are synthesized via the mevalonate pathway. Biosynthesis of the major metabolite GA3 (gibberellic acid) from geranylgeranyl diphosphate (GGPP) requires 13 steps. The GGPP produced by the geranylgeranyl diphosphate synthase GGS2 is converted to ent-kaurene via ent-copalyldiphosphate in a two-step cyclization reaction performed by the bifunctional ent-copalyl diphosphate synthase/ent-kaurene synthase enzyme (CPS/KS). Ent-Kaurene is metabolized to GAs by a series of oxidation reactions catalyzed by cytochrome P450 monooxygenases. Cytochrome P450 monooxygenase P450-4 is an ent-kaurene oxidase that catalyzes the three oxidation steps between ent-kaurene and ent-kaurenoic acid. The highly multifunctional cytochrome P450 monooxygenase P450-1 then catalyzes four steps involving oxidation at two carbon atoms, in the main pathway from ent-kaurenoic acid to GA14 via GA12-aldehyde as well as producing kaurenolides and fujenoic acids as by-products. The cytochrome P450 monooxygenase P450-2 then converts GA14 to GA4 by removal of C-20. GA4 is further converted to GA7 by the GA4 desaturase DES via 1,2-desaturation before cytochrome P450 monooxygenase P450-3, a 13-hydroxylase, hydroxylates GA7 to GA3, the final product of the GA-biosynthetic pathway. The chain is Geranylgeranyl pyrophosphate synthase 2 from Gibberella fujikuroi (strain CBS 195.34 / IMI 58289 / NRRL A-6831) (Bakanae and foot rot disease fungus).